The following is a 79-amino-acid chain: Small ribosomal subunit protein bS16 (79 aa).

The protein belongs to the bacterial ribosomal protein bS16 family.

The chain is Small ribosomal subunit protein bS16 from Buchnera aphidicola subsp. Acyrthosiphon pisum (strain 5A).